We begin with the raw amino-acid sequence, 239 residues long: Purine nucleoside phosphorylase DeoD-type (239 aa).

His-5 contacts a purine D-ribonucleoside. Phosphate is bound by residues Gly-21, Arg-25, Arg-44, and 88–91; that span reads RVGS. Residues 180-182 and 204-205 each bind a purine D-ribonucleoside; these read EME and SD. The active-site Proton donor is the Asp-205.

It belongs to the PNP/UDP phosphorylase family. Homohexamer; trimer of homodimers.

It catalyses the reaction a purine D-ribonucleoside + phosphate = a purine nucleobase + alpha-D-ribose 1-phosphate. The enzyme catalyses a purine 2'-deoxy-D-ribonucleoside + phosphate = a purine nucleobase + 2-deoxy-alpha-D-ribose 1-phosphate. Catalyzes the reversible phosphorolytic breakdown of the N-glycosidic bond in the beta-(deoxy)ribonucleoside molecules, with the formation of the corresponding free purine bases and pentose-1-phosphate. This chain is Purine nucleoside phosphorylase DeoD-type, found in Erwinia tasmaniensis (strain DSM 17950 / CFBP 7177 / CIP 109463 / NCPPB 4357 / Et1/99).